A 306-amino-acid chain; its full sequence is Curved DNA-binding protein (306 aa).

A J domain is found at D5–W69.

The protein resides in the cytoplasm. The protein localises to the nucleoid. Its function is as follows. DNA-binding protein that preferentially recognizes a curved DNA sequence. It is probably a functional analog of DnaJ; displays overlapping activities with DnaJ, but functions under different conditions, probably acting as a molecular chaperone in an adaptive response to environmental stresses other than heat shock. Lacks autonomous chaperone activity; binds native substrates and targets them for recognition by DnaK. Its activity is inhibited by the binding of CbpM. This chain is Curved DNA-binding protein, found in Salmonella paratyphi A (strain ATCC 9150 / SARB42).